A 400-amino-acid polypeptide reads, in one-letter code: Argininosuccinate synthase (400 aa).

ATP contacts are provided by residues 11–19 (AYSGGLDTS) and Ala-38. L-citrulline is bound by residues Tyr-89 and Ser-94. Gly-119 is a binding site for ATP. Thr-121, Asn-125, and Asp-126 together coordinate L-aspartate. Asn-125 serves as a coordination point for L-citrulline. 5 residues coordinate L-citrulline: Arg-129, Ser-178, Ser-187, Glu-263, and Tyr-275.

The protein belongs to the argininosuccinate synthase family. Type 1 subfamily. As to quaternary structure, homotetramer.

The protein localises to the cytoplasm. It carries out the reaction L-citrulline + L-aspartate + ATP = 2-(N(omega)-L-arginino)succinate + AMP + diphosphate + H(+). Its pathway is amino-acid biosynthesis; L-arginine biosynthesis; L-arginine from L-ornithine and carbamoyl phosphate: step 2/3. This Desulfatibacillum aliphaticivorans protein is Argininosuccinate synthase.